Reading from the N-terminus, the 285-residue chain is Vacuolar protein sorting-associated protein 37B (285 aa).

The segment at 50–170 (ASNRSLAEGN…ELVLKGQRHP (121 aa)) is interaction with IST1. A VPS37 C-terminal domain is found at 84-173 (FEAYQIKKTK…LKGQRHPQAG (90 aa)). Disordered regions lie at residues 167 to 215 (QRHP…PPVP) and 242 to 285 (PLPP…FILQ). Composition is skewed to pro residues over residues 173–184 (GAPPPPRVPEPS) and 206–215 (RIPPPPPPVP). Over residues 250-259 (PSQQGFSAQL) the composition is skewed to polar residues. The span at 262-275 (PYPPALPQRPPPRM) shows a compositional bias: pro residues. Residues 276 to 285 (APHQPGFILQ) are compositionally biased toward low complexity.

The protein belongs to the VPS37 family. In terms of assembly, component of the ESCRT-I complex (endosomal sorting complex required for transport I) which consists of TSG101, VPS28, a VPS37 protein (VPS37A to -D) and MVB12A or MVB12B in a 1:1:1:1 stoichiometry. Interacts with TSG101, VPS28, MVB12A and MVB12B. Component of the ESCRT-I complex (endosomal sorting complex required for transport I) which consists of TSG101, VPS28, a VPS37 protein (VPS37A to -D) and UBAP1 in a 1:1:1:1 stoichiometry. Interacts with CEP55. Interacts with IST1.

Its subcellular location is the late endosome membrane. Its function is as follows. Component of the ESCRT-I complex, a regulator of vesicular trafficking process. Required for the sorting of endocytic ubiquitinated cargos into multivesicular bodies. May be involved in cell growth and differentiation. The sequence is that of Vacuolar protein sorting-associated protein 37B (Vps37b) from Mus musculus (Mouse).